A 191-amino-acid polypeptide reads, in one-letter code: Cytochrome c oxidase subunit 6b-1 (191 aa).

The segment covering 1–14 (MADAVNAQTPSLSE) has biased composition (polar residues). Residues 1–126 (MADAVNAQTP…IKLETAPADF (126 aa)) form a disordered region. Residue Ala2 is modified to N-acetylalanine. Basic and acidic residues-rich tracts occupy residues 16–37 (YHLE…KEVA) and 45–56 (EEVKTEQAKEES). The span at 72–98 (APESTEVASEAPAAAEDNAEETPAAAE) shows a compositional bias: low complexity. The segment covering 99–114 (ENNDENASEEVAEETP) has biased composition (acidic residues). The CHCH domain occupies 134 to 177 (TRHCFTRYVEYHRCVAAKGDDAPECDKFAKFYRSLCPSEWVDRW). Positions 137–147 (CFTRYVEYHRC) match the Cx9C motif motif. Disulfide bonds link Cys137–Cys169 and Cys147–Cys158. The Cx10C motif motif lies at 158–169 (CDKFAKFYRSLC).

This sequence belongs to the cytochrome c oxidase subunit 6B (TC 3.D.4.8) family. Expressed in the whole plant.

It localises to the mitochondrion. This protein is one of the nuclear-coded polypeptide chains of cytochrome c oxidase, the terminal oxidase in mitochondrial electron transport. This protein may be one of the heme-binding subunits of the oxidase. The chain is Cytochrome c oxidase subunit 6b-1 (COX6B-1) from Arabidopsis thaliana (Mouse-ear cress).